Here is a 280-residue protein sequence, read N- to C-terminus: Aquaporin PIP2-7 (280 aa).

M1 carries the post-translational modification N-acetylmethionine. Residues 1-38 (MSKEVSEEGKTHHGKDYVDPPPAPLLDMGELKSWSFYR) are Cytoplasmic-facing. Position 3 is an N6,N6-dimethyllysine (K3). A helical transmembrane segment spans residues 39–59 (ALIAEFIATLLFLYVTVATVI). Topologically, residues 60 to 69 (GHKKQTGPCD) are extracellular. A helical membrane pass occupies residues 70 to 90 (GVGLLGIAWAFGGMIFVLVYC). Residues 91-118 (TAGISGGHINPAVTFGLFLARKVSLVRA) are Cytoplasmic-facing. Residues 100 to 102 (NPA) carry the NPA 1 motif. The helical transmembrane segment at 119 to 139 (LGYMIAQCLGAICGVGFVKAF) threads the bilayer. The Extracellular segment spans residues 140 to 160 (MKTPYNTLGGGANTVADGYSK). The chain crosses the membrane as a helical span at residues 161-181 (GTALGAEIIGTFVLVYTVFSA). At 182–192 (TDPKRSARDSH) the chain is on the cytoplasmic side. A helical transmembrane segment spans residues 193-213 (IPVLAPLPIGFAVFMVHLATI). The Extracellular portion of the chain corresponds to 214-242 (PITGTGINPARSFGAAVIYNNEKAWDDQW). The short motif at 221–223 (NPA) is the NPA 2 element. The helical transmembrane segment at 243-263 (IFWVGPFLGALAAAAYHQYIL) threads the bilayer. Residues 264-280 (RASAIKALGSFRSNATN) are Cytoplasmic-facing. Phosphoserine is present on residues S273 and S276. T279 carries the post-translational modification Phosphothreonine.

Belongs to the MIP/aquaporin (TC 1.A.8) family. PIP (TC 1.A.8.11) subfamily. As to quaternary structure, interacts with SYP61 and SYP121 in trafficking vesicles and at the plasma membrane. As to expression, highly expressed in flowers, expressed at low levels in siliques, and at low level in leaves and roots. Highly levels in elongating cells in both roots and shoots.

It is found in the cell membrane. In terms of biological role, water channel required to facilitate the transport of water across cell membrane. May be involved in the osmoregulation in plants under high osmotic stress such as under a high salt condition. The polypeptide is Aquaporin PIP2-7 (Arabidopsis thaliana (Mouse-ear cress)).